Consider the following 564-residue polypeptide: Probable diguanylate cyclase DgcQ (564 aa).

The next 2 membrane-spanning stretches (helical) occupy residues 20-40 (LGPG…STLL) and 360-380 (IALT…WYVI). The GGDEF domain occupies 428-563 (HPFSVIQVDL…GRNRVFASDN (136 aa)). Residue aspartate 436 coordinates Mg(2+). Asparagine 444, histidine 449, and aspartate 453 together coordinate substrate. Glutamate 479 is a Mg(2+) binding site. The Proton acceptor role is filled by glutamate 479.

Homodimer. It depends on Mg(2+) as a cofactor.

The protein localises to the cell inner membrane. The catalysed reaction is 2 GTP = 3',3'-c-di-GMP + 2 diphosphate. The protein operates within glycan metabolism; bacterial cellulose biosynthesis. It participates in purine metabolism; 3',5'-cyclic di-GMP biosynthesis. Catalyzes the synthesis of cyclic-di-GMP (c-di-GMP) via the condensation of 2 GTP molecules. Cyclic-di-GMP is a second messenger which controls cell surface-associated traits in bacteria. Involved in the regulation of cellulose production. This is Probable diguanylate cyclase DgcQ from Escherichia coli (strain K12).